Here is an 85-residue protein sequence, read N- to C-terminus: uncharacterized protein (85 aa).

2 helical membrane-spanning segments follow: residues isoleucine 20–leucine 42 and isoleucine 52–tyrosine 69.

It localises to the membrane. This is an uncharacterized protein from Saccharomyces cerevisiae (strain ATCC 204508 / S288c) (Baker's yeast).